Here is a 205-residue protein sequence, read N- to C-terminus: Guanylate kinase (205 aa).

A Guanylate kinase-like domain is found at 19–197; the sequence is PKLFTISAPA…AYRVLKSIFI (179 aa). 26-33 serves as a coordination point for ATP; sequence APAGVGKT.

This sequence belongs to the guanylate kinase family.

The protein resides in the cytoplasm. The catalysed reaction is GMP + ATP = GDP + ADP. Essential for recycling GMP and indirectly, cGMP. This Chlamydia pneumoniae (Chlamydophila pneumoniae) protein is Guanylate kinase (gmk).